Consider the following 350-residue polypeptide: DNA polymerase IV (350 aa).

The UmuC domain occupies 7-188 (IIHIDMDYFF…LPVKKLFGVG (182 aa)). Residues Asp-11 and Asp-106 each coordinate Mg(2+). The active site involves Glu-107.

It belongs to the DNA polymerase type-Y family. Monomer. It depends on Mg(2+) as a cofactor.

It is found in the cytoplasm. It carries out the reaction DNA(n) + a 2'-deoxyribonucleoside 5'-triphosphate = DNA(n+1) + diphosphate. Functionally, poorly processive, error-prone DNA polymerase involved in untargeted mutagenesis. Copies undamaged DNA at stalled replication forks, which arise in vivo from mismatched or misaligned primer ends. These misaligned primers can be extended by PolIV. Exhibits no 3'-5' exonuclease (proofreading) activity. May be involved in translesional synthesis, in conjunction with the beta clamp from PolIII. In Francisella philomiragia subsp. philomiragia (strain ATCC 25017 / CCUG 19701 / FSC 153 / O#319-036), this protein is DNA polymerase IV.